The following is a 293-amino-acid chain: ATP phosphoribosyltransferase (293 aa).

This sequence belongs to the ATP phosphoribosyltransferase family. Long subfamily. Mg(2+) serves as cofactor.

The protein localises to the cytoplasm. It catalyses the reaction 1-(5-phospho-beta-D-ribosyl)-ATP + diphosphate = 5-phospho-alpha-D-ribose 1-diphosphate + ATP. It participates in amino-acid biosynthesis; L-histidine biosynthesis; L-histidine from 5-phospho-alpha-D-ribose 1-diphosphate: step 1/9. Its activity is regulated as follows. Feedback inhibited by histidine. Its function is as follows. Catalyzes the condensation of ATP and 5-phosphoribose 1-diphosphate to form N'-(5'-phosphoribosyl)-ATP (PR-ATP). Has a crucial role in the pathway because the rate of histidine biosynthesis seems to be controlled primarily by regulation of HisG enzymatic activity. This is ATP phosphoribosyltransferase from Nitratidesulfovibrio vulgaris (strain DSM 19637 / Miyazaki F) (Desulfovibrio vulgaris).